A 62-amino-acid chain; its full sequence is Short neurotoxin C (62 aa).

The span at 1 to 16 shows a compositional bias: polar residues; sequence RRCFNQQSSQPQTNKS. Residues 1-21 form a disordered region; sequence RRCFNQQSSQPQTNKSCPPGE. 4 cysteine pairs are disulfide-bonded: cysteine 3/cysteine 24, cysteine 17/cysteine 41, cysteine 43/cysteine 54, and cysteine 55/cysteine 60.

It belongs to the three-finger toxin family. Short-chain subfamily. Type I alpha-neurotoxin sub-subfamily. In terms of tissue distribution, expressed by the venom gland.

The protein resides in the secreted. In terms of biological role, binds to muscle nicotinic acetylcholine receptor (nAChR) and inhibit acetylcholine from binding to the receptor, thereby impairing neuromuscular transmission. The polypeptide is Short neurotoxin C (Laticauda crockeri (Crocker's sea snake)).